A 494-amino-acid chain; its full sequence is Cysteine--tRNA ligase (494 aa).

Zn(2+) is bound at residue cysteine 29. The short motif at 31-41 (VTVYDYCHLGH) is the 'HIGH' region element. The Zn(2+) site is built by cysteine 216, histidine 241, and glutamate 245. Positions 273–277 (KMSKS) match the 'KMSKS' region motif. Lysine 276 is an ATP binding site.

The protein belongs to the class-I aminoacyl-tRNA synthetase family. In terms of assembly, monomer. Requires Zn(2+) as cofactor.

It is found in the cytoplasm. It catalyses the reaction tRNA(Cys) + L-cysteine + ATP = L-cysteinyl-tRNA(Cys) + AMP + diphosphate. The chain is Cysteine--tRNA ligase from Cyanothece sp. (strain PCC 7425 / ATCC 29141).